Here is a 431-residue protein sequence, read N- to C-terminus: Adenylosuccinate synthetase (431 aa).

GTP-binding positions include 12 to 18 (GDEGKGK) and 40 to 42 (GHT). Asp13 (proton acceptor) is an active-site residue. 2 residues coordinate Mg(2+): Asp13 and Gly40. IMP contacts are provided by residues 13–16 (DEGK), 38–41 (NAGH), Thr129, Arg143, Gln224, and Thr239. Catalysis depends on His41, which acts as the Proton donor. Lys292 is covalently cross-linked (Isoglutamyl lysine isopeptide (Lys-Gln) (interchain with Q-Cter in protein Pup)). 299 to 305 (VTTGRAR) is a substrate binding site. Arg303 is an IMP binding site. Residues Arg305, 331-333 (KLD), and 413-415 (GVG) each bind GTP.

It belongs to the adenylosuccinate synthetase family. Homodimer. The cofactor is Mg(2+).

It is found in the cytoplasm. The enzyme catalyses IMP + L-aspartate + GTP = N(6)-(1,2-dicarboxyethyl)-AMP + GDP + phosphate + 2 H(+). Its pathway is purine metabolism; AMP biosynthesis via de novo pathway; AMP from IMP: step 1/2. Its function is as follows. Plays an important role in the de novo pathway of purine nucleotide biosynthesis. Catalyzes the first committed step in the biosynthesis of AMP from IMP. The polypeptide is Adenylosuccinate synthetase (Mycolicibacterium smegmatis (strain ATCC 700084 / mc(2)155) (Mycobacterium smegmatis)).